The primary structure comprises 210 residues: High-affinity nitrate transporter 3.1 (210 aa).

Positions 1-22 (MAIQKILFASLLICSLIQSIHG) are cleaved as a signal peptide. Residues 178 to 198 (LDIASICFSVFSVVALVVFFV) form a helical membrane-spanning segment.

It belongs to the NAR2 family. As to quaternary structure, heterotetramer composed of two NRT2.1 and two NRT3.1. Interacts with NRT2.1 and NRT2.3. Interacts with all other NRT2 transporters, including NRT2.5. Highly expressed in roots. Detected in shoots.

The protein localises to the cell membrane. Its function is as follows. Acts as a dual component transporter with NTR2.1. Required for high-affinity nitrate transport. Acts as a repressor of lateral root initiation. May be involved in targeting NRT2 proteins to the plasma membrane. The protein is High-affinity nitrate transporter 3.1 (NRT3.1) of Arabidopsis thaliana (Mouse-ear cress).